We begin with the raw amino-acid sequence, 110 residues long: Ribonuclease P protein component 1 (110 aa).

This sequence belongs to the eukaryotic/archaeal RNase P protein component 1 family. As to quaternary structure, consists of a catalytic RNA component and at least 4-5 protein subunits.

Its subcellular location is the cytoplasm. It catalyses the reaction Endonucleolytic cleavage of RNA, removing 5'-extranucleotides from tRNA precursor.. Functionally, part of ribonuclease P, a protein complex that generates mature tRNA molecules by cleaving their 5'-ends. This chain is Ribonuclease P protein component 1, found in Methanosarcina barkeri (strain Fusaro / DSM 804).